Reading from the N-terminus, the 263-residue chain is Tryptophan synthase alpha chain (263 aa).

Catalysis depends on proton acceptor residues Glu49 and Asp60.

Belongs to the TrpA family. As to quaternary structure, tetramer of two alpha and two beta chains.

The enzyme catalyses (1S,2R)-1-C-(indol-3-yl)glycerol 3-phosphate + L-serine = D-glyceraldehyde 3-phosphate + L-tryptophan + H2O. It participates in amino-acid biosynthesis; L-tryptophan biosynthesis; L-tryptophan from chorismate: step 5/5. The alpha subunit is responsible for the aldol cleavage of indoleglycerol phosphate to indole and glyceraldehyde 3-phosphate. The polypeptide is Tryptophan synthase alpha chain (Cereibacter sphaeroides (strain ATCC 17025 / ATH 2.4.3) (Rhodobacter sphaeroides)).